Reading from the N-terminus, the 79-residue chain is Major outer membrane lipoprotein Lpp 2 (79 aa).

A signal peptide spans 1-21 (MNRTNKLILGAVVLGSTLLAG). Cys22 is lipidated: N-palmitoyl cysteine. Cys22 carries S-diacylglycerol cysteine lipidation. Repeats lie at residues 25–35 (NAKIDQLSSDV) and 39–49 (SAKVDQLSNDV). The stretch at 28–69 (IDQLSSDVQTLSAKVDQLSNDVNAMRSDVQAAKDDAARANQR) forms a coiled coil. An N6-murein peptidoglycan lysine modification is found at Lys79.

The protein belongs to the Lpp family. In terms of assembly, homotrimer.

The protein resides in the cell outer membrane. Its subcellular location is the secreted. It localises to the cell wall. Its function is as follows. A highly abundant outer membrane lipoprotein that controls the distance between the inner and outer membranes. The only protein known to be covalently linked to the peptidoglycan network (PGN). Also non-covalently binds the PGN. The link between the cell outer membrane and PGN contributes to maintenance of the structural and functional integrity of the cell envelope, and maintains the correct distance between the PGN and the outer membrane. The sequence is that of Major outer membrane lipoprotein Lpp 2 from Salmonella typhi.